We begin with the raw amino-acid sequence, 487 residues long: Galactose-1-phosphate uridylyltransferase (487 aa).

This sequence belongs to the galactose-1-phosphate uridylyltransferase type 2 family.

It localises to the cytoplasm. The enzyme catalyses alpha-D-galactose 1-phosphate + UDP-alpha-D-glucose = alpha-D-glucose 1-phosphate + UDP-alpha-D-galactose. It functions in the pathway carbohydrate metabolism; galactose metabolism. The chain is Galactose-1-phosphate uridylyltransferase from Lactiplantibacillus plantarum (strain ATCC BAA-793 / NCIMB 8826 / WCFS1) (Lactobacillus plantarum).